A 302-amino-acid polypeptide reads, in one-letter code: Snake venom metalloprotease inhibitor 02A10 (302 aa).

An N-terminal signal peptide occupies residues 1–23 (MSVSRLAASGLLLVSLLALALDG). Positions 24-47 (KPVEKWSPWLWPPRPRPPIPPLQQ) are excised as a propeptide. The segment at 32–302 (WLWPPRPRPP…CPKLPPSGGH (271 aa)) is disordered. Positions 33 to 44 (LWPPRPRPPIPP) are enriched in pro residues. Gln-48 is modified (pyrrolidone carboxylic acid). Residues 51 to 58 (LDPPIPQQ) constitute a propeptide that is removed on maturation. Position 59 is a pyrrolidone carboxylic acid (Gln-59). A propeptide spanning residues 62 to 69 (LDPPIPQQ) is cleaved from the precursor. Gln-70 carries the post-translational modification Pyrrolidone carboxylic acid. Positions 73–80 (LDPPIPQQ) are excised as a propeptide. Residue Gln-81 is modified to Pyrrolidone carboxylic acid. The propeptide occupies 84–91 (LNPPIPQQ). Pyrrolidone carboxylic acid is present on Gln-92. The propeptide occupies 95-102 (LDPPIPQQ). At Gln-103 the chain carries Pyrrolidone carboxylic acid. Residues 106–113 (LNPPIPQQ) constitute a propeptide that is removed on maturation. Gln-114 carries the pyrrolidone carboxylic acid modification. Positions 117–124 (LNPPIPQQ) are excised as a propeptide. Pyrrolidone carboxylic acid is present on Gln-125. Positions 128–135 (LNPPIPQQ) are excised as a propeptide. Position 136 is a pyrrolidone carboxylic acid (Gln-136). Positions 139 to 146 (LNPPIPQQ) are excised as a propeptide. At Gln-147 the chain carries Pyrrolidone carboxylic acid. Residues 150-157 (LDPPIPQQ) constitute a propeptide that is removed on maturation. Gln-158 carries the pyrrolidone carboxylic acid modification. Residues 161 to 168 (LDPPIPQQ) constitute a propeptide that is removed on maturation. Position 169 is a pyrrolidone carboxylic acid (Gln-169). The propeptide occupies 172–179 (LDPPIPQQ). Gln-180 carries the post-translational modification Pyrrolidone carboxylic acid. The propeptide occupies 183-190 (LNPPIPQQ). Gln-191 bears the Pyrrolidone carboxylic acid mark. Residues 194–201 (LDPPIPQQ) constitute a propeptide that is removed on maturation. A Pyrrolidone carboxylic acid modification is found at Gln-202. Residues 205–212 (LDPPIPQQ) constitute a propeptide that is removed on maturation. Gln-213 is subject to Pyrrolidone carboxylic acid. Positions 216 to 223 (LNPPIPQQ) are excised as a propeptide. Gln-224 is subject to Pyrrolidone carboxylic acid. Positions 227-273 (QRPLQPEVPSLMELHQERQKQGRMMHHDEDPGDAAEGPRRQKKEPGK) are excised as a propeptide. Basic and acidic residues-rich tracts occupy residues 240 to 255 (LHQE…HHDE) and 262 to 273 (EGPRRQKKEPGK). Cysteines 279 and 293 form a disulfide. A propeptide spanning residues 294-302 (PKLPPSGGH) is cleaved from the precursor.

In the C-terminal section; belongs to the natriuretic peptide family. In terms of tissue distribution, expressed by the venom gland.

The protein resides in the secreted. In terms of biological role, pEKW peptides may serve as metalloproteinase inhibitors during glandular storage. Their inhibition may be instantly disengaged, by dilution or physiochemical change, when venom is injected into tissue of the victim. Its function is as follows. Exhibits hypotensive and vasodepressor activity. Acts by activating natriuretic receptors (NPR1 and/or NPR2 and/or NPR3). This Cerastes cerastes (Horned desert viper) protein is Snake venom metalloprotease inhibitor 02A10 (Svmpi-Cce12).